A 945-amino-acid polypeptide reads, in one-letter code: Protein translocase subunit SecA (945 aa).

Residues glutamine 90, 108-112, and aspartate 509 each bind ATP; that span reads GEGKT. The segment at 533-568 is disordered; sequence VKPEDGHKPPVPLQRRSESSGFGEDKDVTTDNSKPL. Positions 547–561 are enriched in basic and acidic residues; the sequence is RRSESSGFGEDKDVT.

Belongs to the SecA family. As to quaternary structure, monomer and homodimer. Part of the essential Sec protein translocation apparatus which comprises SecA, SecYEG and auxiliary proteins SecDF. Other proteins may also be involved.

Its subcellular location is the cell inner membrane. The protein resides in the cellular thylakoid membrane. It localises to the cytoplasm. The enzyme catalyses ATP + H2O + cellular proteinSide 1 = ADP + phosphate + cellular proteinSide 2.. Part of the Sec protein translocase complex. Interacts with the SecYEG preprotein conducting channel. Has a central role in coupling the hydrolysis of ATP to the transfer of proteins into and across the cell membrane, serving as an ATP-driven molecular motor driving the stepwise translocation of polypeptide chains across the membrane. Its function is as follows. Probably participates in protein translocation into and across both the cytoplasmic and thylakoid membranes in cyanobacterial cells. The protein is Protein translocase subunit SecA of Prochlorococcus marinus (strain MIT 9211).